The sequence spans 102 residues: Glutaredoxin-C13 (102 aa).

The region spanning 1–101 (MDKVMRMSSE…PLIKPYQSIL (101 aa)) is the Glutaredoxin domain. A disulfide bond links Cys-21 and Cys-24.

Belongs to the glutaredoxin family. CC-type subfamily.

It is found in the cytoplasm. Its function is as follows. Has a glutathione-disulfide oxidoreductase activity in the presence of NADPH and glutathione reductase. Reduces low molecular weight disulfides and proteins. This chain is Glutaredoxin-C13 (GRXC13), found in Arabidopsis thaliana (Mouse-ear cress).